We begin with the raw amino-acid sequence, 275 residues long: Large ribosomal subunit protein uL2 (275 aa).

The segment at 208–275 (AGAKRWRGRR…NMIIRDRRKK (68 aa)) is disordered. 2 stretches are compositionally biased toward basic residues: residues 209 to 219 (GAKRWRGRRPT) and 254 to 263 (KGYKTRRNKR).

Belongs to the universal ribosomal protein uL2 family. As to quaternary structure, part of the 50S ribosomal subunit. Forms a bridge to the 30S subunit in the 70S ribosome.

Its function is as follows. One of the primary rRNA binding proteins. Required for association of the 30S and 50S subunits to form the 70S ribosome, for tRNA binding and peptide bond formation. It has been suggested to have peptidyltransferase activity; this is somewhat controversial. Makes several contacts with the 16S rRNA in the 70S ribosome. This is Large ribosomal subunit protein uL2 from Coxiella burnetii (strain CbuK_Q154) (Coxiella burnetii (strain Q154)).